Reading from the N-terminus, the 142-residue chain is Hemoglobin subunit alpha (142 aa).

A Globin domain is found at 2 to 142 (VLSPADKSNV…VSTVLTSKYR (141 aa)). Ser-4 carries the post-translational modification Phosphoserine. N6-succinyllysine is present on residues Lys-8 and Lys-12. Position 17 is an N6-acetyllysine; alternate (Lys-17). Lys-17 carries the post-translational modification N6-succinyllysine; alternate. A Phosphotyrosine modification is found at Tyr-25. Ser-36 carries the phosphoserine modification. Lys-41 bears the N6-succinyllysine mark. Phosphoserine is present on Ser-50. Residue His-59 participates in O2 binding. His-88 is a binding site for heme b. The residue at position 103 (Ser-103) is a Phosphoserine. A Phosphothreonine modification is found at Thr-109. Residues Ser-125 and Ser-132 each carry the phosphoserine modification. A phosphothreonine mark is found at Thr-135 and Thr-138. A Phosphoserine modification is found at Ser-139.

This sequence belongs to the globin family. Heterotetramer of two alpha chains and two beta chains. Red blood cells.

In terms of biological role, involved in oxygen transport from the lung to the various peripheral tissues. Its function is as follows. Hemopressin acts as an antagonist peptide of the cannabinoid receptor CNR1. Hemopressin-binding efficiently blocks cannabinoid receptor CNR1 and subsequent signaling. The sequence is that of Hemoglobin subunit alpha (HBA) from Chlorocebus aethiops (Green monkey).